A 364-amino-acid polypeptide reads, in one-letter code: Inactive protein RESTRICTED TEV MOVEMENT 2 (364 aa).

Residues 14–121 enclose the sHSP domain; it reads VQYEDFVPKS…LPETSRTEAA (108 aa). One copy of the A-1 repeat lies at 129–133; it reads LEEKR. The interval 129–220 is 6 X 5 AA repeats A of L-E-E-[SKR]-[ERK]; that stretch reads LEEKRLLEES…LEERRLEERK (92 aa). The A-2 repeat unit spans residues 135-139; that stretch reads LEESR. The A-3 repeat unit spans residues 156–160; it reads LEEKE. Residues 163–176 form a B-1 repeat; the sequence is IRKLQEEAKAKEEA. The tract at residues 163–206 is 3 X 14 AA repeats B of [IMA]-[RK]-K-L-Q-E-E-A-K-A-K-E-[EK]-[LA]; that stretch reads IRKLQEEAKAKEEAEMRKLQEEAKAKEEAAAKKLQEEIEAKEKL. Residues 178-191 form a B-2 repeat; the sequence is MRKLQEEAKAKEEA. One copy of the B-3 repeat lies at 193–205; sequence AKKLQEEIEAKEK. An A-4 repeat occupies 206 to 210; it reads LEERK. One copy of the A-5 repeat lies at 211–215; it reads LEERR. The A-6 repeat unit spans residues 216–220; sequence LEERK. Residues 322–342 form a helical membrane-spanning segment; sequence LMMNVGVAALVIFALGAYVSY. The segment at 345–364 is disordered; that stretch reads CSSSSSSSSPSSSSSSTKPE. Positions 346–364 are enriched in low complexity; it reads SSSSSSSSPSSSSSSTKPE.

This sequence belongs to the small heat shock protein (HSP20) family.

Its subcellular location is the cell membrane. In terms of biological role, seems to not be involved in heat resistance. Unable to mediate restriction of long-distance movement of the pathogenic tobacco etch virus (TEV) without causing a hypersensitive response or inducing systemic acquired resistance. This is Inactive protein RESTRICTED TEV MOVEMENT 2 (RTM2) from Arabidopsis thaliana (Mouse-ear cress).